The chain runs to 35 residues: Photosystem II reaction center protein T (35 aa).

The chain crosses the membrane as a helical span at residues 3-23 (ALVYTFLLVGTLGIIFFAIFF).

The protein belongs to the PsbT family. As to quaternary structure, PSII is composed of 1 copy each of membrane proteins PsbA, PsbB, PsbC, PsbD, PsbE, PsbF, PsbH, PsbI, PsbJ, PsbK, PsbL, PsbM, PsbT, PsbY, PsbZ, Psb30/Ycf12, at least 3 peripheral proteins of the oxygen-evolving complex and a large number of cofactors. It forms dimeric complexes.

The protein resides in the plastid. Its subcellular location is the chloroplast thylakoid membrane. Found at the monomer-monomer interface of the photosystem II (PS II) dimer, plays a role in assembly and dimerization of PSII. PSII is a light-driven water plastoquinone oxidoreductase, using light energy to abstract electrons from H(2)O, generating a proton gradient subsequently used for ATP formation. In Zygnema circumcarinatum (Green alga), this protein is Photosystem II reaction center protein T.